The following is a 448-amino-acid chain: DNA repair protein RadA (448 aa).

The C4-type zinc-finger motif lies at 10–27 (CSNCGNTSPKWSGQCFDC). 91–98 (GDPGIGKS) is an ATP binding site. The RadA KNRFG motif motif lies at 250–254 (KNRFG). The lon-protease-like stretch occupies residues 349 to 448 (EVYLSIAGGL…KDLKLLLGSS (100 aa)).

This sequence belongs to the RecA family. RadA subfamily.

DNA-dependent ATPase involved in processing of recombination intermediates, plays a role in repairing DNA breaks. Stimulates the branch migration of RecA-mediated strand transfer reactions, allowing the 3' invading strand to extend heteroduplex DNA faster. Binds ssDNA in the presence of ADP but not other nucleotides, has ATPase activity that is stimulated by ssDNA and various branched DNA structures, but inhibited by SSB. Does not have RecA's homology-searching function. The sequence is that of DNA repair protein RadA from Rickettsia bellii (strain RML369-C).